A 65-amino-acid chain; its full sequence is MKEGIHPNYTEVTVKCLCGNTFQTRSTKPEISTEICSACHPFFTGKQKLIDTAGRVERFKRRYGM.

The Zn(2+) site is built by Cys-16, Cys-18, Cys-36, and Cys-39.

The protein belongs to the bacterial ribosomal protein bL31 family. Type A subfamily. As to quaternary structure, part of the 50S ribosomal subunit. Zn(2+) serves as cofactor.

Functionally, binds the 23S rRNA. In Geotalea uraniireducens (strain Rf4) (Geobacter uraniireducens), this protein is Large ribosomal subunit protein bL31.